Consider the following 305-residue polypeptide: Homoserine O-acetyltransferase (305 aa).

Cys142 (acyl-thioester intermediate) is an active-site residue. Positions 163 and 192 each coordinate substrate. His235 (proton acceptor) is an active-site residue. Glu237 is a catalytic residue. Arg249 serves as a coordination point for substrate.

It belongs to the MetA family.

The protein resides in the cytoplasm. The enzyme catalyses L-homoserine + acetyl-CoA = O-acetyl-L-homoserine + CoA. It functions in the pathway amino-acid biosynthesis; L-methionine biosynthesis via de novo pathway; O-acetyl-L-homoserine from L-homoserine: step 1/1. Its function is as follows. Transfers an acetyl group from acetyl-CoA to L-homoserine, forming acetyl-L-homoserine. In Phocaeicola vulgatus (strain ATCC 8482 / DSM 1447 / JCM 5826 / CCUG 4940 / NBRC 14291 / NCTC 11154) (Bacteroides vulgatus), this protein is Homoserine O-acetyltransferase.